The chain runs to 259 residues: MGKDGEGDKKRETMAVMSLMKDQQNPIQQFQVKFKEIETGFKSWLSKQKLPVEAAVVTAMGGVQGAFIGGLMGTLSPEMPQAGIDPQAMASLKQTQALVGGPLVQARNFAAITGVNAGIACVMKRIRGKEDLESAVVAAFGSGVAYSLVSAGLQGQPMNAITTAAGFAVFQGVFFKLGERFSKPSVEDPYYTRGRSMLLKLGLEKYEKNFKKGLLADPTLPLLTDSALRDVSIPPGPRLLILDHIQRDPELKGKRGSRG.

4 helical membrane passes run 55–75 (AVVT…MGTL), 108–124 (NFAA…CVMK), 135–155 (AVVA…GLQG), and 158–178 (MNAI…FKLG).

The protein belongs to the Tim17/Tim22/Tim23 family. In terms of assembly, probable component of a protein-conducting channel made of HP30-1, HP30-2 and HP20 that mediates the import of transit sequence-less proteins into the chloroplastic inner membrane. Interacts with CEQORH.

It is found in the mitochondrion membrane. It localises to the plastid. Its subcellular location is the chloroplast inner membrane. In terms of biological role, together with HP30-1 and HP20, triggers the import and insertion of transit sequence-less multi-pass transmembrane proteins (e.g. CEQORH) into the chloroplastic inner membrane. This Arabidopsis thaliana (Mouse-ear cress) protein is Chloroplastic import inner membrane translocase subunit HP30-2.